The primary structure comprises 417 residues: Cysteate synthase (417 aa).

Lys104 carries the N6-(pyridoxal phosphate)lysine modification. 2 residues coordinate pyridoxal 5'-phosphate: Asn131 and Thr371.

The protein belongs to the threonine synthase family. Cysteate synthase subfamily. As to quaternary structure, homotrimer. Pyridoxal 5'-phosphate is required as a cofactor.

The enzyme catalyses O-phospho-L-serine + sulfite + H(+) = L-cysteate + phosphate. The protein operates within cofactor biosynthesis; coenzyme M biosynthesis. In terms of biological role, specifically catalyzes the beta-elimination of phosphate from L-phosphoserine and the beta-addition of sulfite to the dehydroalanine intermediate to produce L-cysteate. The protein is Cysteate synthase of Methanococcoides burtonii (strain DSM 6242 / NBRC 107633 / OCM 468 / ACE-M).